The chain runs to 242 residues: Ribose-5-phosphate isomerase A (242 aa).

Substrate contacts are provided by residues 39–42 (SGST), 95–98 (DGAD), and 108–111 (KGGG). Glutamate 117 (proton acceptor) is an active-site residue. Lysine 135 is a binding site for substrate.

The protein belongs to the ribose 5-phosphate isomerase family. In terms of assembly, homodimer.

The enzyme catalyses aldehydo-D-ribose 5-phosphate = D-ribulose 5-phosphate. It participates in carbohydrate degradation; pentose phosphate pathway; D-ribose 5-phosphate from D-ribulose 5-phosphate (non-oxidative stage): step 1/1. In terms of biological role, catalyzes the reversible conversion of ribose-5-phosphate to ribulose 5-phosphate. The chain is Ribose-5-phosphate isomerase A from Chlamydia trachomatis serovar D (strain ATCC VR-885 / DSM 19411 / UW-3/Cx).